A 261-amino-acid chain; its full sequence is Methyltransferase nsrG (261 aa).

The interval 49–141 (DVGAGNGPYA…AHQLRPGALF (93 aa)) is methyltransferase domain.

It belongs to the methyltransferase superfamily.

It functions in the pathway secondary metabolite biosynthesis. Methyltransferase; part of the gene cluster that mediates the biosynthesis of the tetrahydroxanthone dimer neosartorin, which exhibits antibacterial activity. The two different monomeric units appear to be synthesized by the same set of enzymes, among which the Baeyer-Villiger monooxygenase nsrF is the key enzyme for the divergence of the biosynthetic routes. The pathway begins with the synthesis of atrochrysone thioester by the polyketide synthase nsrB. The atrochrysone carboxyl ACP thioesterase nsrC then breaks the thioester bond and releases the atrochrysone carboxylic acid from AacuL. Atrochrysone carboxylic acid is decarboxylated by the decarboxylase nsrE, and oxidized by the anthrone oxygenase nsrD to yield emodin. Emodin is then reduced to emodin hydroquinone by the oxidoreductase nsrR. A-ring reduction by the short chain dehydrogenase nsrJ, dehydration by the scytalone dehydratase-like protein nsrI and probable spontaneous re-oxidation, results in overall deoxygenation to chrysophanol. The Baeyer-Villiger monooxygenase nsrF accepts chrysophanol as a substrate to insert one oxygen atom at two different positions to yield the precursors of both monomric units. NsrF is promiscuous/flexible in interacting with the 2 (non methylated and methylated) aromatic rings of chrysophanol, thus diverging the biosynthetic pathway at this point. After the hydrolysis of the lactones, methylesterification by the methyltransferase nsrG yields respectively moniliphenone and 2,2',6'-trihydroxy-4-methyl-6-methoxya-cyldiphenylmethanone. The next steps are the hydroxylation by the FAD-dependent monooxygenase nsrK, followed by isomerization by the monooxygenase nsrQ. The short chain dehydrogenase/reductase nsrO then catalyzes the C-5 ketoreduction to give the xanthone skeleton of blennolide C and 5-acetylblennolide A. The acetyltransferase nsrL has a strict substrate specificity and uses only blennolide A but not blennolide C to yield 5-acetylblennolide A as the single-acetylated product. In the final step of the biosynthesis, the heterodimerization of the 2 xanthones, blennolide C and 5-acetylblennolide A, is catalyzed by the cytochrome P450 monooxygenase nsrP. NsrP can utilize at least three different xanthones as its substrates to perform the dimerization reaction. The sequence is that of Methyltransferase nsrG from Aspergillus novofumigatus (strain IBT 16806).